The sequence spans 162 residues: Putative 4-hydroxy-4-methyl-2-oxoglutarate aldolase (162 aa).

Substrate-binding positions include G75–L78 and R97. Residue D98 participates in a divalent metal cation binding.

Belongs to the class II aldolase/RraA-like family. Homotrimer. A divalent metal cation is required as a cofactor.

It carries out the reaction 4-hydroxy-4-methyl-2-oxoglutarate = 2 pyruvate. The enzyme catalyses oxaloacetate + H(+) = pyruvate + CO2. Catalyzes the aldol cleavage of 4-hydroxy-4-methyl-2-oxoglutarate (HMG) into 2 molecules of pyruvate. Also contains a secondary oxaloacetate (OAA) decarboxylase activity due to the common pyruvate enolate transition state formed following C-C bond cleavage in the retro-aldol and decarboxylation reactions. This chain is Putative 4-hydroxy-4-methyl-2-oxoglutarate aldolase, found in Pseudomonas aeruginosa (strain LESB58).